The sequence spans 318 residues: NADH-quinone oxidoreductase subunit H 2 (318 aa).

9 consecutive transmembrane segments (helical) span residues Leu4–Phe24, Leu77–Pro97, Val106–Ala126, Leu146–Phe166, Leu179–Ala199, Leu214–Glu234, Ile238–Leu258, Val262–Leu282, and Phe293–Ala313.

This sequence belongs to the complex I subunit 1 family. NDH-1 is composed of 14 different subunits. Subunits NuoA, H, J, K, L, M, N constitute the membrane sector of the complex.

Its subcellular location is the cell inner membrane. The enzyme catalyses a quinone + NADH + 5 H(+)(in) = a quinol + NAD(+) + 4 H(+)(out). Its function is as follows. NDH-1 shuttles electrons from NADH, via FMN and iron-sulfur (Fe-S) centers, to quinones in the respiratory chain. The immediate electron acceptor for the enzyme in this species is believed to be ubiquinone. Couples the redox reaction to proton translocation (for every two electrons transferred, four hydrogen ions are translocated across the cytoplasmic membrane), and thus conserves the redox energy in a proton gradient. This subunit may bind ubiquinone. The polypeptide is NADH-quinone oxidoreductase subunit H 2 (Cereibacter sphaeroides (strain ATCC 17029 / ATH 2.4.9) (Rhodobacter sphaeroides)).